Reading from the N-terminus, the 174-residue chain is 3-hydroxyanthranilate 3,4-dioxygenase (174 aa).

Arg-47 is a binding site for O2. Fe cation contacts are provided by His-51, Glu-57, and His-95. Glu-57 lines the substrate pocket. Substrate is bound by residues Arg-99 and Glu-110. Fe cation is bound by residues Cys-125, Cys-128, Cys-162, and Cys-165.

This sequence belongs to the 3-HAO family. In terms of assembly, homodimer. The cofactor is Fe(2+).

It catalyses the reaction 3-hydroxyanthranilate + O2 = (2Z,4Z)-2-amino-3-carboxymuconate 6-semialdehyde. The protein operates within cofactor biosynthesis; NAD(+) biosynthesis; quinolinate from L-kynurenine: step 3/3. With respect to regulation, inhibited by 4-chloro-3-hydroxyanthranilate. Mechanism of inactivation involves the oxidation of the catalytic active site Fe(2+) to the catalytically inactive Fe(3+) oxidation state, superoxide production, and formation of two disulfide bonds between Cys-125 and Cys-128, and Cys-162 and Cys-165. Enzyme can be reactivated under reducing conditions. Catalyzes the oxidative ring opening of 3-hydroxyanthranilate to 2-amino-3-carboxymuconate semialdehyde, which spontaneously cyclizes to quinolinate. This is 3-hydroxyanthranilate 3,4-dioxygenase from Cupriavidus metallidurans (strain ATCC 43123 / DSM 2839 / NBRC 102507 / CH34) (Ralstonia metallidurans).